The following is a 299-amino-acid chain: Nicotinate-nucleotide pyrophosphorylase [carboxylating] (299 aa).

The segment at His-8–Pro-12 is important for hexamer formation. Quinolinate contacts are provided by residues Arg-102, Arg-138–Lys-139, His-160–Arg-161, Lys-171, Glu-201, Asp-222, Ser-248–Gly-250, and Gly-270. Thr-291 bears the Phosphothreonine mark.

This sequence belongs to the NadC/ModD family. In terms of assembly, hexamer formed by 3 homodimers.

The enzyme catalyses nicotinate beta-D-ribonucleotide + CO2 + diphosphate = quinolinate + 5-phospho-alpha-D-ribose 1-diphosphate + 2 H(+). It participates in cofactor biosynthesis; NAD(+) biosynthesis; nicotinate D-ribonucleotide from quinolinate: step 1/1. Functionally, involved in the catabolism of quinolinic acid (QA). The polypeptide is Nicotinate-nucleotide pyrophosphorylase [carboxylating] (QPRT) (Bos taurus (Bovine)).